Reading from the N-terminus, the 322-residue chain is UDP-N-acetylenolpyruvoylglucosamine reductase (322 aa).

An FAD-binding PCMH-type domain is found at arginine 36 to glycine 202. The active site involves arginine 182. Serine 231 serves as the catalytic Proton donor. The active site involves glutamate 301.

This sequence belongs to the MurB family. It depends on FAD as a cofactor.

Its subcellular location is the cytoplasm. The catalysed reaction is UDP-N-acetyl-alpha-D-muramate + NADP(+) = UDP-N-acetyl-3-O-(1-carboxyvinyl)-alpha-D-glucosamine + NADPH + H(+). The protein operates within cell wall biogenesis; peptidoglycan biosynthesis. In terms of biological role, cell wall formation. The protein is UDP-N-acetylenolpyruvoylglucosamine reductase of Brucella abortus (strain S19).